The primary structure comprises 59 residues: Large ribosomal subunit protein bL32 (59 aa).

The protein belongs to the bacterial ribosomal protein bL32 family.

The chain is Large ribosomal subunit protein bL32 from Synechococcus sp. (strain JA-2-3B'a(2-13)) (Cyanobacteria bacterium Yellowstone B-Prime).